The chain runs to 89 residues: Calsenilin isoform 4 (89 aa).

Residues 27 to 57 are disordered; it reads SSRDAEDQGSREGIGWQPPGRSWAHTTEQEG.

Isoform 1 or isoform 4 (T+ forms) are expressed at equal levels with isoform 2 or isoform 3 (T- forms) in brain.

Unknown for isoform 4. Csen is involved in calcium-dependent transcriptional repression, regulation of potassium channels, and perhaps in processing of PSEN2 and apoptosis. The chain is Calsenilin isoform 4 (Kcnip3) from Mus musculus (Mouse).